Reading from the N-terminus, the 494-residue chain is Neuronal acetylcholine receptor subunit alpha-6 (494 aa).

An N-terminal signal peptide occupies residues methionine 1–glycine 30. Over cysteine 31–proline 240 the chain is Extracellular. Residues asparagine 54 and asparagine 171 are each glycosylated (N-linked (GlcNAc...) asparagine). Disulfide bonds link cysteine 158/cysteine 172 and cysteine 222/cysteine 223. 3 consecutive transmembrane segments (helical) span residues methionine 241–proline 265, valine 272–threonine 290, and tyrosine 306–isoleucine 327. Residues histidine 328 to arginine 465 are Cytoplasmic-facing. Positions glutamine 399–serine 423 are disordered. Serine 401 is modified (phosphoserine). A helical membrane pass occupies residues valine 466–glutamine 485.

The protein belongs to the ligand-gated ion channel (TC 1.A.9) family. Acetylcholine receptor (TC 1.A.9.1) subfamily. Alpha-6/CHRNA6 sub-subfamily. As to quaternary structure, neuronal AChR is composed of two different types of subunits: alpha and non-alpha (beta). CHRNA6/alpha-6 subunit can be combined to CHRNB2/beta-2 and CHRNA4/alpha-4 to give rise to functional receptors. Interacts with LYPD6. Predominantly expressed in only a few brain areas, including dopaminergic neurons, norepirephrine neurons and cells of the visual system.

The protein resides in the synaptic cell membrane. It carries out the reaction K(+)(in) = K(+)(out). The catalysed reaction is Na(+)(in) = Na(+)(out). The enzyme catalyses Ca(2+)(in) = Ca(2+)(out). With respect to regulation, activated by a myriad of ligands such as acetylcholine, cytisine and nicotine. CHRNA6 nAChR activity is inhibited by the antagonists alpha-conotoxin MII and PIA, a small disulfide-constrained peptides from cone snails. Its function is as follows. Component of neuronal acetylcholine receptors (nAChRs) that function as pentameric, ligand-gated cation channels with high calcium permeability among other activities. nAChRs are excitatory neurotrasnmitter receptors formed by a collection of nAChR subunits known to mediate synaptic transmission in the nervous system and the neuromuscular junction. Each nAchR subunit confers differential attributes to channel properties, including activation, deactivation and desensitization kinetics, pH sensitivity, cation permeability, and binding to allosteric modulators. CHRNA6 forms pentameric channels with CHRNB2 and CHRNA4 that exhibit high sensitivity to ACh and nicotine and are predominantly expressed in only a few brain areas, including dopaminergic neurons, norepirephrine neurons and cells of the visual system. nAChrs containing CHRNA6 subunits mediate endogenous cholinergic modulation of dopamine and gamma-aminobutyric acid (GABA) release in response to nicotine at nerve terminals. This is Neuronal acetylcholine receptor subunit alpha-6 (Chrna6) from Mus musculus (Mouse).